Here is a 366-residue protein sequence, read N- to C-terminus: GTP cyclohydrolase 1 type 2 homolog (366 aa).

Residues His-64, His-65, Asp-102, His-326, and Glu-329 each contribute to the Zn(2+) site.

The protein belongs to the GTP cyclohydrolase I type 2/NIF3 family. Homohexamer.

The polypeptide is GTP cyclohydrolase 1 type 2 homolog (Staphylococcus aureus (strain MRSA252)).